A 347-amino-acid polypeptide reads, in one-letter code: Isocitrate dehydrogenase [NAD] subunit alpha, mitochondrial (347 aa).

The transit peptide at Gln-1–Phe-8 directs the protein to the mitochondrion. Thr-14–Ile-42 contributes to the NAD(+) binding site. Position 58 is an N6-succinyllysine (Lys-58). The residue at position 82 (Thr-82) is a Phosphothreonine. 3 residues coordinate substrate: Arg-96, Arg-106, and Arg-127. Lys-204 is subject to N6-acetyllysine. Asp-214, Asp-238, and Asp-242 together coordinate Mg(2+). Lys-324 carries the N6-acetyllysine; alternate modification. N6-succinyllysine; alternate is present on Lys-324. Lys-331 carries the post-translational modification N6-succinyllysine.

Belongs to the isocitrate and isopropylmalate dehydrogenases family. Heterooligomer of subunits alpha (IDH3A), beta (IDH3B), and gamma (IDH3G) in the apparent ratio of 2:1:1. The heterodimer containing one IDH3A and one IDH3B subunit and the heterodimer containing one IDH3A and one IDH3G subunit assemble into a heterotetramer (which contains two subunits of IDH3A, one of IDH3B and one of IDH3G) and further into the heterooctamer. The cofactor is Mg(2+). Mn(2+) is required as a cofactor.

It is found in the mitochondrion. It catalyses the reaction D-threo-isocitrate + NAD(+) = 2-oxoglutarate + CO2 + NADH. With respect to regulation, the heterotetramer and the heterodimer composed of IDH3A and IDH3G subunits can be allosterically activated by citrate (CIT) or/and ADP, and the two activators can act independently or synergistically. The heterodimer composed of IDH3A and IDH3B subunits cannot be allosterically regulated and the allosteric regulation of the heterotetramer is through the IDH3G subunit and not the IDH3B subunit. The IDH3G subunit contains the allosteric site which consists of a CIT-binding site and an ADP-binding site, and the binding of CIT and ADP causes conformational changes at the allosteric site which are transmitted to the active site in the catalytic subunit (IDH3A) through a cascade of conformational changes at the heterodimer interface, leading to stabilization of the isocitrate-binding at the active site and thus activation of the enzyme. ATP can activate the heterotetramer and the heterodimer composed of IDH3A and IDH3G subunits at low concentrations but inhibits their activities at high concentrations, whereas ATP exhibits only inhibitory effect on the heterodimer composed of IDH3A and IDH3B subunits. Functionally, catalytic subunit of the enzyme which catalyzes the decarboxylation of isocitrate (ICT) into alpha-ketoglutarate. The heterodimer composed of the alpha (IDH3A) and beta (IDH3B) subunits and the heterodimer composed of the alpha (IDH3A) and gamma (IDH3G) subunits, have considerable basal activity but the full activity of the heterotetramer (containing two subunits of IDH3A, one of IDH3B and one of IDH3G) requires the assembly and cooperative function of both heterodimers. The chain is Isocitrate dehydrogenase [NAD] subunit alpha, mitochondrial (IDH3A) from Macaca fascicularis (Crab-eating macaque).